A 349-amino-acid polypeptide reads, in one-letter code: MILICLCRQGFEKEVAAEITDCAAYAGIAGYVKTNADTGYVEFVLPDLDSATALFEAIRFDDLVFVRHWFVTPAIASDLPKEDRASPLMASAQALPPLAKLEPITLDTNDGKALVALTRGVTNHMRTVFKKAGAFNAKSDWVGQVLFFSGEQACIGYFPQSNGSLWVGGIPRLRAPKDAPSRATLKLEEAWHQFIPREQWDQRIAPSMRAVDLGAAPGGWTWQLVNKSMFVEAVDNGPMAENIMASGQVTHRMEDAFRFAPERAVHWLVSDIADKPARVAELITRWAENKWFKEAVFNLKLPMKKRYIELQLCSEIITLALDNAGIEYTLKFKQLYHDREEVTGHLVLF.

Residues 216 to 219 (APGG), Asp-235, Asp-255, and Asp-271 contribute to the S-adenosyl-L-methionine site. Lys-300 (proton acceptor) is an active-site residue.

The protein belongs to the class I-like SAM-binding methyltransferase superfamily. RNA methyltransferase RlmE family. RlmM subfamily. Monomer.

It localises to the cytoplasm. The enzyme catalyses cytidine(2498) in 23S rRNA + S-adenosyl-L-methionine = 2'-O-methylcytidine(2498) in 23S rRNA + S-adenosyl-L-homocysteine + H(+). Functionally, catalyzes the 2'-O-methylation at nucleotide C2498 in 23S rRNA. This is Ribosomal RNA large subunit methyltransferase M from Saccharophagus degradans (strain 2-40 / ATCC 43961 / DSM 17024).